The primary structure comprises 598 residues: Pentatricopeptide repeat-containing protein At1g09900 (598 aa).

14 PPR repeats span residues 101-135 (EDVE…GNVP), 136-170 (DIIP…GAVP), 171-201 (DVIT…MSVS), 203-237 (DVVT…DCYP), 238-272 (DVIT…GCTP), 273-307 (DVVT…GCQP), 308-342 (NVIT…GFSP), 343-377 (SVVT…GCQP), 378-412 (NSLS…GCYP), 413-447 (DIVT…GCSP), 448-482 (VLIT…DLKP), 483-517 (DTIT…GIRP), 518-552 (NAVT…GCKP), and 553-587 (NETS…GLMK).

Belongs to the PPR family. P subfamily.

The protein is Pentatricopeptide repeat-containing protein At1g09900 of Arabidopsis thaliana (Mouse-ear cress).